We begin with the raw amino-acid sequence, 457 residues long: Proline-specific permease ProY (457 aa).

Over 1 to 17 (MESKNKLKRGLSTRHIR) the chain is Cytoplasmic. The next 2 helical transmembrane spans lie at 18 to 38 (FMAL…DAIK) and 39 to 59 (MAGP…YIIM). Over 60 to 84 (RALGEMSVHNPAASSFSRYAQENLG) the chain is Cytoplasmic. Residues 85 to 105 (PLAGYITGWTYCFEILIVAIA) traverse the membrane as a helical segment. Topologically, residues 106 to 113 (DVTAFGIY) are periplasmic. Residues 114–134 (MGVWFPTVPHWIWVLSVVLII) traverse the membrane as a helical segment. At 135–156 (CAVNLMSVKVFGELEFWFSFFK) the chain is on the cytoplasmic side. A helical transmembrane segment spans residues 157 to 177 (VATIIIMIVAGFGIIIWGIGN). Topologically, residues 178 to 197 (GGQPTGIHNLWSNGGFFSNG) are periplasmic. A helical transmembrane segment spans residues 198–218 (WLGMVMSLQMVMFAYGGIEII). At 219–242 (GITAGEAKDPEKSIPRAINSVPMR) the chain is on the cytoplasmic side. A helical membrane pass occupies residues 243-263 (ILVFYVGTLFVIMSIYPWNQV). Topologically, residues 264–277 (GTAGSPFVLTFQHM) are periplasmic. The chain crosses the membrane as a helical span at residues 278 to 298 (GITFAASILNFVVLTASLSAI). Residues 299-331 (NSDVFGVGRMLHGMAEQGSAPKIFSKTSRRGIP) are Cytoplasmic-facing. Residues 332-352 (WVTVLVMTTALLFAVYLNYIM) form a helical membrane-spanning segment. The Periplasmic portion of the chain corresponds to 353–355 (PEN). The helical transmembrane segment at 356–376 (VFLVIASLATFATVWVWIMIL) threads the bilayer. Residues 377-399 (LSQIAFRRRLPPEEVKALKFKVP) are Cytoplasmic-facing. A helical transmembrane segment spans residues 400 to 420 (GGVATTIGGLIFLLFIIGLIG). Topologically, residues 421–424 (YHPD) are periplasmic. The helical transmembrane segment at 425–445 (TRISLYVGFAWIVVLLIGWMF) threads the bilayer. Over 446–457 (KRRHDRQLAENQ) the chain is Cytoplasmic.

It belongs to the amino acid-polyamine-organocation (APC) superfamily. Amino acid transporter (AAT) (TC 2.A.3.1) family.

Its subcellular location is the cell inner membrane. In terms of biological role, permease that is involved in the transport across the cytoplasmic membrane of proline. This is Proline-specific permease ProY (proY) from Escherichia coli O157:H7.